A 201-amino-acid polypeptide reads, in one-letter code: Large ribosomal subunit protein uL4 (201 aa).

Positions 42–67 (GNSAQKTRSEVSGGGKKPWNQKGTGR) are disordered.

It belongs to the universal ribosomal protein uL4 family. Part of the 50S ribosomal subunit.

In terms of biological role, one of the primary rRNA binding proteins, this protein initially binds near the 5'-end of the 23S rRNA. It is important during the early stages of 50S assembly. It makes multiple contacts with different domains of the 23S rRNA in the assembled 50S subunit and ribosome. Forms part of the polypeptide exit tunnel. The sequence is that of Large ribosomal subunit protein uL4 from Legionella pneumophila (strain Lens).